Reading from the N-terminus, the 635-residue chain is MNLAVIRLFKHHVNNIPNILPHQLATLDYLVRSIIDENKSVLLFHIMGSGKTIIALLFALVASRFKKVYILVPNINILKIFNYSMDVVINLFNADYILENIFIYSTTSFYSINYNDNVINYNGLSRYNNAIFIIDEAHNIFGNNTGELMTVIKNRNKIPFLLLSGSPITNTPITLSNIISLMSDEEINFSDIIIQGKKVFQILLNEHGVNVLKNILKGRISYYEMPDTDLPGIQYHGKSFLDTRVVYCNMSKLQEKDYINVRKMCNNEMFEKNMNNVSLAVLGQLNLINNLDILFQEQDKELYPNLKINNGVLYGEELVTLNISSKFKYFINKIENLKGKHFIYFSNSTYGGLIIKYIMLSNGYSEYNGSQGTYPKLIHGKPKTFAIVTSKMKASLEDLLVTYNSLANDDGSQIMFLFSSNIMSESYTLKEVRNIWFMTIPDTFSQYNQILGRSIRKFSYKDITQPVNVYLLATVYSDFNDTIESLDDYSLEEINTLPFDIKKLLYLKFKTKETNRIYSILESISDSYTQPPHPHIVEIVLGEIVRQFFYHHSRIKQNDERLLTAVKSVLTNTEAAKKYIKEIVDGHFFVSNKVFDKSLLYAYKDEIITVPFKLSHEPFVWGVNFRKEYNVVSSP.

Positions 32-185 (RSIIDENKSV…SNIISLMSDE (154 aa)) constitute a Helicase ATP-binding domain. 45–52 (HIMGSGKT) lines the ATP pocket. The DEXH box signature appears at 135–138 (DEAH). A Helicase C-terminal domain is found at 326–505 (KFKYFINKIE…TLPFDIKKLL (180 aa)).

The protein belongs to the helicase family. VETF subfamily. In terms of assembly, heterodimer of a 70 kDa and a 82 kDa subunit. Part of the early transcription complex composed of ETF, RAP94, and the DNA-directed RNA polymerase.

Its subcellular location is the virion. Acts with RNA polymerase to initiate transcription from early gene promoters. Is recruited by the RPO-associated protein of 94 kDa (RAP94) to form the early transcription complex, which also contains the core RNA polymerase. ETF heterodimer binds to early gene promoters. This Oryctolagus cuniculus (Rabbit) protein is Early transcription factor 70 kDa subunit (VETFS).